The following is a 191-amino-acid chain: Protein Ves (191 aa).

It belongs to the Ves family.

This Escherichia coli (strain SE11) protein is Protein Ves.